Here is a 246-residue protein sequence, read N- to C-terminus: Zorya protein ZorB (246 aa).

The chain crosses the membrane as a helical span at residues 20–40; that stretch reads FWISYADLMTAMMVLFLVVMV. Residues 86–218 enclose the OmpA-like domain; that stretch reads CHDNRISFGE…RVELRMQFFG (133 aa).

It belongs to the MotB family.

The protein localises to the cell inner membrane. Component of antiviral defense system Zorya type I, composed of ZorA, ZorB, ZorC and ZorD. Expression of Zorya type I in E.coli (strain MG1655) confers 10,000-fold resistance to phage SECphi27, 100-fold resistance to lambda, and 10-fold resistance to T7. While most T7 infected Zorya-containing cells undergo abortive infection, a minority produce viable phage progeny. These eventually accumulate to a high multiplicity of infection, leading to culture collapse by 2 hours after initial infection. ZorA and ZorB probably assemble in the cell inner membrane and exert their effect there. The sequence is that of Zorya protein ZorB from Escherichia coli O139:H28 (strain E24377A / ETEC).